Here is a 386-residue protein sequence, read N- to C-terminus: 11-beta-hydroxysteroid dehydrogenase type 2 (386 aa).

An NAD(+)-binding site is contributed by 82–111 (TRAVLITGCDTGFGKETAKKLDAMGFTVLA). A substrate-binding site is contributed by Ser-219. Tyr-232 serves as the catalytic Proton acceptor.

The protein belongs to the short-chain dehydrogenases/reductases (SDR) family. Interacts with ligand-free cytoplasmic NR3C2. In terms of tissue distribution, highly expressed in kidney. Also found in colon and small intestine. Not expressed in the adrenal gland. Expressed in uterus.

It localises to the microsome. It is found in the endoplasmic reticulum. The enzyme catalyses an 11beta-hydroxysteroid + NAD(+) = an 11-oxosteroid + NADH + H(+). It catalyses the reaction corticosterone + NAD(+) = 11-dehydrocorticosterone + NADH + H(+). It carries out the reaction 11beta,17beta-dihydroxyandrost-4-ene-3-one + NAD(+) = 17beta-hydroxyandrost-4-ene-3,11-dione + NADH + H(+). The catalysed reaction is 11beta-hydroxyandrost-4-ene-3,17-dione + NAD(+) = androst-4-ene-3,11,17-trione + NADH + H(+). It functions in the pathway steroid metabolism. Its activity is regulated as follows. Inhibited by glycyrrhetinic acid. Induced by progesterone, through the Ihh signaling pathway. Catalyzes the conversion of biologically active 11beta-hydroxyglucocorticoids (11beta-hydroxysteroid) such as corticosterone, to inactive 11-ketoglucocorticoids (11-oxosteroid) such as 11-dehydrocorticosterone, in the presence of NAD(+). Functions as a dehydrogenase (oxidase), thereby decreasing the concentration of active glucocorticoids, thus protecting the nonselective mineralocorticoid receptor from occupation by glucocorticoids. Plays an important role in maintaining glucocorticoids balance during preimplantation and protects the fetus from excessive maternal corticosterone exposure. Catalyzes the oxidation of 11beta-hydroxytestosterone (11beta,17beta-dihydroxyandrost-4-ene-3-one) to 11-ketotestosterone (17beta-hydroxyandrost-4-ene-3,11-dione), a major bioactive androgen. Catalyzes the conversion of 11beta-hydroxyandrostenedione (11beta-hydroxyandrost-4-ene-3,17-dione) to 11-ketoandrostenedione (androst-4-ene-3,11,17-trione), which can be further metabolized to 11-ketotestosterone. Converts 7-beta-25-dihydroxycholesterol to 7-oxo-25-hydroxycholesterol in vitro. 7-beta-25-dihydroxycholesterol (not 7-oxo-25-hydroxycholesterol) acts as a ligand for the G-protein-coupled receptor (GPCR) Epstein-Barr virus-induced gene 2 (EBI2) and may thereby regulate immune cell migration. This chain is 11-beta-hydroxysteroid dehydrogenase type 2 (Hsd11b2), found in Mus musculus (Mouse).